The primary structure comprises 200 residues: 3-isopropylmalate dehydratase small subunit (200 aa).

The protein belongs to the LeuD family. LeuD type 1 subfamily. Heterodimer of LeuC and LeuD.

It catalyses the reaction (2R,3S)-3-isopropylmalate = (2S)-2-isopropylmalate. Its pathway is amino-acid biosynthesis; L-leucine biosynthesis; L-leucine from 3-methyl-2-oxobutanoate: step 2/4. Catalyzes the isomerization between 2-isopropylmalate and 3-isopropylmalate, via the formation of 2-isopropylmaleate. This chain is 3-isopropylmalate dehydratase small subunit, found in Pectobacterium atrosepticum (strain SCRI 1043 / ATCC BAA-672) (Erwinia carotovora subsp. atroseptica).